The primary structure comprises 328 residues: Putative potassium channel protein YugO (328 aa).

Helical transmembrane passes span 19-39 (IGVI…ILEP), 42-62 (FTSV…VGYG), and 73-93 (AAGI…FATL). Residues 114–238 (RDHIILIGWN…ERAGANQIIG (125 aa)) form the RCK N-terminal domain.

It localises to the cell membrane. The protein is Putative potassium channel protein YugO (yugO) of Bacillus subtilis (strain 168).